Here is a 475-residue protein sequence, read N- to C-terminus: NADH-quinone oxidoreductase subunit N (475 aa).

14 consecutive transmembrane segments (helical) span residues 7-27, 40-60, 74-94, 105-125, 127-147, 161-181, 191-211, 242-262, 266-286, 295-315, 321-341, 365-385, 399-419, and 448-468; these read ISIAAPEALLIGVALIGVLLG, LLGALALAGAAFLAASQSAVD, FIAIAKAVSYGVGAIALLVAG, FEYTLLVMFGSAGMGVMLSAN, LMTLYMGIETLSLSSYVLAAF, YFVLGALASGLLLFGCSLVYG, IAAADQSIGLTFGLVLILMAL, APKLATVAVLANIMFTVFGVY, WMLIIAIVSAISMLVGAFGGL, LAYSSIANVGYALMGVAAGEV, VLTYMTIYVITTLGMFGIVLA, LAVAMTVLVFSVAGIPPMAGF, ELYWLVAVGVIGSVVSLGYYL, and GATILAFPVLVIWIGWMTGII.

Belongs to the complex I subunit 2 family. As to quaternary structure, NDH-1 is composed of 14 different subunits. Subunits NuoA, H, J, K, L, M, N constitute the membrane sector of the complex.

It is found in the cell inner membrane. It catalyses the reaction a quinone + NADH + 5 H(+)(in) = a quinol + NAD(+) + 4 H(+)(out). Its function is as follows. NDH-1 shuttles electrons from NADH, via FMN and iron-sulfur (Fe-S) centers, to quinones in the respiratory chain. The immediate electron acceptor for the enzyme in this species is believed to be ubiquinone. Couples the redox reaction to proton translocation (for every two electrons transferred, four hydrogen ions are translocated across the cytoplasmic membrane), and thus conserves the redox energy in a proton gradient. In Hirschia baltica (strain ATCC 49814 / DSM 5838 / IFAM 1418), this protein is NADH-quinone oxidoreductase subunit N.